We begin with the raw amino-acid sequence, 560 residues long: DNA ligase B (560 aa).

Lys124 serves as the catalytic N6-AMP-lysine intermediate.

This sequence belongs to the NAD-dependent DNA ligase family. LigB subfamily.

The catalysed reaction is NAD(+) + (deoxyribonucleotide)n-3'-hydroxyl + 5'-phospho-(deoxyribonucleotide)m = (deoxyribonucleotide)n+m + AMP + beta-nicotinamide D-nucleotide.. In terms of biological role, catalyzes the formation of phosphodiester linkages between 5'-phosphoryl and 3'-hydroxyl groups in double-stranded DNA using NAD as a coenzyme and as the energy source for the reaction. This Escherichia coli O6:H1 (strain CFT073 / ATCC 700928 / UPEC) protein is DNA ligase B.